The following is a 196-amino-acid chain: Thymidine kinase (196 aa).

ATP is bound by residues 9-16 (GTMNSGKS) and 85-88 (DEAQ). Residue E86 is the Proton acceptor of the active site. Zn(2+) contacts are provided by C143, C146, C180, and H183.

This sequence belongs to the thymidine kinase family. Homotetramer.

Its subcellular location is the cytoplasm. The catalysed reaction is thymidine + ATP = dTMP + ADP + H(+). This is Thymidine kinase from Streptococcus thermophilus (strain CNRZ 1066).